Here is a 539-residue protein sequence, read N- to C-terminus: MQLTELSIRSQNLFIRDYIEEKKEMTTFFDYDIHSEHTWKKRYDDLMKMSFPREALADYMSAYHAKFESAAMRQNIEKIRDKRSVMVVGGQQAGLLTGPLYTIHKIISIIQFAKEKETELGVPVIPVFWVAGEDHDVDEINFVYTSGEKGPVKQKLSLHNVKKAAAKRIPLDQEKTEIWLRDVFSTYEESAYTNDLLVQLLRCLRKSQTFTDFFEWIVCDLFEEDGLLLFNSGDLGVKPLERTLFKHIVETNDEVTNRLNESQAAMKRAGYQPIIEAGDNQANLFYEYDEERFLIEKENGRFFISEVGLTWTKEELLKEVEEHPERFSNNVVTRPLMQETLLPTLAFMAGHGEVNYWGELKGIFEHFHLKMAPVLPRLHVTILERHIDKKLPVRELSVEEVLTNGVKEKKDAHFQQSLPDSFVQAVEHAKRELANAHGVMRQEALEIEPNFEQLLDKNAKFIEDQLQFVYQKVAQRVEEKEGYILRDFERIENSLKPLDAPQERIWNIMYFLNKYGPEFFKTFKNLPFSFQNKQQIVKL.

The stretch at 249 to 270 (VETNDEVTNRLNESQAAMKRAG) forms a coiled coil.

It belongs to the BshC family.

In terms of biological role, involved in bacillithiol (BSH) biosynthesis. May catalyze the last step of the pathway, the addition of cysteine to glucosamine malate (GlcN-Mal) to generate BSH. This chain is Putative cysteine ligase BshC, found in Bacillus pumilus (strain SAFR-032).